The sequence spans 757 residues: Polyribonucleotide nucleotidyltransferase (757 aa).

Residues aspartate 488 and aspartate 494 each coordinate Mg(2+). The KH domain occupies proline 555–isoleucine 614. Residues glycine 624–lysine 692 enclose the S1 motif domain. Residues valine 693–glycine 757 form a disordered region. The segment covering alanine 720–proline 736 has biased composition (basic and acidic residues). Low complexity predominate over residues proline 737 to proline 747.

The protein belongs to the polyribonucleotide nucleotidyltransferase family. It depends on Mg(2+) as a cofactor.

It localises to the cytoplasm. The catalysed reaction is RNA(n+1) + phosphate = RNA(n) + a ribonucleoside 5'-diphosphate. In terms of biological role, involved in mRNA degradation. Catalyzes the phosphorolysis of single-stranded polyribonucleotides processively in the 3'- to 5'-direction. The chain is Polyribonucleotide nucleotidyltransferase from Verminephrobacter eiseniae (strain EF01-2).